The chain runs to 283 residues: Phosphatidylglycerol--prolipoprotein diacylglyceryl transferase (283 aa).

Helical transmembrane passes span 18–38, 62–82, 106–126, 136–156, 190–210, 218–238, and 252–272; these read LGGI…VVAF, YFLW…VLIY, FIGI…IASY, LLIY…FGRI, PSQL…VMWA, GLLI…AEFY, and LSMG…ILLY. Arg-155 is an a 1,2-diacyl-sn-glycero-3-phospho-(1'-sn-glycerol) binding site.

The protein belongs to the Lgt family.

It is found in the cell inner membrane. The enzyme catalyses L-cysteinyl-[prolipoprotein] + a 1,2-diacyl-sn-glycero-3-phospho-(1'-sn-glycerol) = an S-1,2-diacyl-sn-glyceryl-L-cysteinyl-[prolipoprotein] + sn-glycerol 1-phosphate + H(+). It functions in the pathway protein modification; lipoprotein biosynthesis (diacylglyceryl transfer). Catalyzes the transfer of the diacylglyceryl group from phosphatidylglycerol to the sulfhydryl group of the N-terminal cysteine of a prolipoprotein, the first step in the formation of mature lipoproteins. The chain is Phosphatidylglycerol--prolipoprotein diacylglyceryl transferase from Helicobacter pylori (strain J99 / ATCC 700824) (Campylobacter pylori J99).